A 359-amino-acid polypeptide reads, in one-letter code: tRNA-specific 2-thiouridylase MnmA (359 aa).

ATP contacts are provided by residues 9-16 and methionine 35; that span reads GISGGVDS. The segment at 95 to 97 is interaction with target base in tRNA; it reads NPD. Catalysis depends on cysteine 100, which acts as the Nucleophile. Cysteine 100 and cysteine 197 are oxidised to a cystine. ATP is bound at residue glycine 124. An interaction with tRNA region spans residues 147 to 149; that stretch reads KDQ. Cysteine 197 serves as the catalytic Cysteine persulfide intermediate. Residues 309 to 310 form an interaction with tRNA region; the sequence is RY.

The protein belongs to the MnmA/TRMU family.

Its subcellular location is the cytoplasm. It carries out the reaction S-sulfanyl-L-cysteinyl-[protein] + uridine(34) in tRNA + AH2 + ATP = 2-thiouridine(34) in tRNA + L-cysteinyl-[protein] + A + AMP + diphosphate + H(+). Catalyzes the 2-thiolation of uridine at the wobble position (U34) of tRNA, leading to the formation of s(2)U34. This Francisella tularensis subsp. holarctica (strain FTNF002-00 / FTA) protein is tRNA-specific 2-thiouridylase MnmA.